Reading from the N-terminus, the 241-residue chain is Uridylate kinase (241 aa).

ATP is bound at residue 9–10; the sequence is GS. Gly-44 serves as a coordination point for UMP. 2 residues coordinate ATP: Gly-45 and Arg-49. UMP-binding positions include Asp-66 and 114 to 120; that span reads IMPGQTT. Residues Thr-140, Tyr-146, and Asp-149 each coordinate ATP.

The protein belongs to the UMP kinase family. Homohexamer.

The protein localises to the cytoplasm. It catalyses the reaction UMP + ATP = UDP + ADP. Its pathway is pyrimidine metabolism; CTP biosynthesis via de novo pathway; UDP from UMP (UMPK route): step 1/1. With respect to regulation, inhibited by UTP. Catalyzes the reversible phosphorylation of UMP to UDP. The protein is Uridylate kinase of Haloquadratum walsbyi (strain DSM 16790 / HBSQ001).